Here is a 726-residue protein sequence, read N- to C-terminus: MAR-binding filament-like protein 1 (726 aa).

The transit peptide at 1-41 directs the protein to the chloroplast; the sequence is MGFLIGGSCFVPSVPLHSRFLSSPSSSSSSSPSSSQFGLLC. Residues 42-95 constitute a thylakoid transit peptide; sequence SSNVAKFKRRRPTLASLNQEDGYEYDVASAKRRAFLLVGISVLPFLQLRSPALA. Topologically, residues 96–124 are lumenal, thylakoid; that stretch reads DERGNEIKTSKVDLETEVAVVSEGTSPNP. Residues 125 to 145 traverse the membrane as a helical segment; that stretch reads FLALLNGLGIFSAGVLGALYA. A coiled-coil region spans residues 144 to 691; sequence YALARQDTKA…KGEILRMRSQ (548 aa). Over 146–726 the chain is Stromal; that stretch reads LARQDTKAAE…VRRRKSSTSS (581 aa). The disordered stretch occupies residues 678-726; it reads LGSAKGEILRMRSQPDSVKAVNSTDNKEKSDNTVTVKKVVRRRKSSTSS. Residues 691-701 are compositionally biased toward polar residues; it reads QPDSVKAVNST. The Nuclear localization signal motif lies at 715–722; it reads KVVRRRKS. A compositionally biased stretch (basic residues) spans 715–726; sequence KVVRRRKSSTSS.

Interacts with PTST2; the interaction is essential for the initiation of starch granules biosynthesis in leaf chloroplasts, for the correct location of the process in the stromal spaces between the thylakoid membranes, and for the association of PTST2 with the thylakoid membranes. Predicted to be translocated into the thylakoid by the Tat system. The position of the transit peptide cleavages have not been experimentally proven.

The protein localises to the plastid. Its subcellular location is the chloroplast. It is found in the chloroplast thylakoid membrane. It localises to the chloroplast stroma. The protein resides in the chloroplast nucleoid. The protein localises to the nucleus. Its subcellular location is the nucleus matrix. Its function is as follows. DNA-binding protein required for the initiation of starch granules biosynthesis in leaf chloroplasts. Anchored to the thylakoid membranes with its C-terminus facing into the stroma where it is essential for localizing PTST2 and SS4 to the stromal spaces between the thylakoid membranes in order to begin starch granule formation. Associated with leaf chloroplastic nucleoids in vivo. Binds to various chloroplastic double-stranded DNA fragments without particular sequence specificity in vitro. May function at the interface between nucleoids and thylakoids possibly by anchoring nucleoids to the thylakoid membrane system in mature chloroplasts. Likely to participate in nuclear architecture by connecting chromatin with the nuclear matrix and potentially with the nuclear envelope. This chain is MAR-binding filament-like protein 1, found in Arabidopsis thaliana (Mouse-ear cress).